The sequence spans 464 residues: MALVALVAGARLGRRLSGPGLGRGHWTAAGRSRSRREAAEAEAEVPVVQYVGERAARADRVFVWGFSFSGALGVPSFVVPSSGPGPRAGARPRRRIQPVPYRLELDQKISSAACGYGFTLLSSKTADVTKVWGMGLNKDSQLGFHRSRKDKTRGYEYVLEPSPVSLPLDRPQETRVLQVSCGRAHSLVLTDREGVFSMGNNSYGQCGRKVVENEIYSESHRVHRMQDFDGQVVQVACGQDHSLFLTDKGEVYSCGWGADGQTGLGHYNITSSPTKLGGDLAGVNVIQVATYGDCCLAVSADGGLFGWGNSEYLQLASVTDSTQVNVPRCLHFSGVGKVRQAACGGTGCAVLNGEGHVFVWGYGILGKGPNLVESAVPEMIPPTLFGLTEFNPEIQVSRIRCGLSHFAALTNKGELFVWGKNIRGCLGIGRLEDQYFPWRVTMPGEPVDVACGVDHMVTLAKSFI.

Residues 1 to 37 constitute a mitochondrion transit peptide; the sequence is MALVALVAGARLGRRLSGPGLGRGHWTAAGRSRSRRE. RCC1 repeat units follow at residues 58 to 124, 128 to 191, 193 to 247, 248 to 300, 302 to 353, 354 to 411, and 412 to 461; these read ADRV…LSSK, VTKV…VLTD, EGVF…FLTD, KGEV…AVSA, GGLF…VLNG, EGHV…ALTN, and KGEL…TLAK.

In terms of assembly, forms a regulatory protein-RNA complex, consisting of RCC1L, NGRN, RPUSD3, RPUSD4, TRUB2, FASTKD2 and 16S mt-rRNA. Interacts with 16S mt-rRNA; this interaction is direct. Interacts with OPA1; this interaction is direct. As to quaternary structure, asociates with the mitochondrial ribosome large subunit (mt-LSU). Asociates with the mitochondrial ribosome small subunit (mt-SSU). Ubiquitous.

The protein localises to the mitochondrion membrane. The protein resides in the mitochondrion inner membrane. In terms of biological role, guanine nucleotide exchange factor (GEF) for mitochondrial dynamin-related GTPase OPA1. Activates OPA1, by exchanging bound GDP for free GTP, and drives OPA1 and MFN1-dependent mitochondrial fusion. Plays an essential role in mitochondrial ribosome biogenesis. As a component of a functional protein-RNA module, consisting of RCC1L, NGRN, RPUSD3, RPUSD4, TRUB2, FASTKD2 and 16S mitochondrial ribosomal RNA (16S mt-rRNA), controls 16S mt-rRNA abundance and is required for intra-mitochondrial translation of core subunits of the oxidative phosphorylation system. Plays an essential role in mitochondrial ribosome biogenesis via its association with GTPases that play a role in the assembly of the large ribosome subunit. Its function is as follows. Plays an essential role in mitochondrial ribosome biogenesis via its association with GTPases that play a role in the assembly of the small ribosome subunit. The protein is RCC1-like G exchanging factor-like protein of Homo sapiens (Human).